We begin with the raw amino-acid sequence, 497 residues long: 3-ketoacyl-CoA synthase 6 (497 aa).

The next 2 helical transmembrane spans lie at 25-45 and 64-84; these read LVNHFLSFLLIPIMAIVAVEL and LVQVLCSSFFVIFISTVYFMS. The FAE domain occupies 81 to 370; it reads YFMSKPRTIY…FLTSLIGRKI (290 aa). Catalysis depends on residues Cys-225, His-304, His-388, His-392, His-421, and Asn-425.

Belongs to the thiolase-like superfamily. Chalcone/stilbene synthases family. In terms of tissue distribution, in epidermal cells of aerial tissues and in the tapetum of anthers near maturity. Expressed in siliques, flowers and leaves.

It is found in the endoplasmic reticulum membrane. It carries out the reaction a very-long-chain acyl-CoA + malonyl-CoA + H(+) = a very-long-chain 3-oxoacyl-CoA + CO2 + CoA. It participates in lipid metabolism; fatty acid biosynthesis. Strongly inhibited by metazachlor and mefluidide. Contributes to cuticular wax and suberin biosynthesis. Involved in both decarbonylation and acyl-reduction wax synthesis pathways. Required for elongation of C24 fatty acids, an essential step of the cuticular wax production. Major condensing enzyme for stem wax and pollen coat lipid biosynthesis. The sequence is that of 3-ketoacyl-CoA synthase 6 from Arabidopsis thaliana (Mouse-ear cress).